The primary structure comprises 359 residues: Elongation factor Ts 1, mitochondrial (359 aa).

Over residues 323-341 (GKAAPAPKAEEPAAVAPAK) the composition is skewed to low complexity. The tract at residues 323–345 (GKAAPAPKAEEPAAVAPAKADAE) is disordered.

Belongs to the EF-Ts family.

It is found in the mitochondrion. In terms of biological role, associates with the EF-Tu.GDP complex and induces the exchange of GDP to GTP. It remains bound to the aminoacyl-tRNA.EF-Tu.GTP complex up to the GTP hydrolysis stage on the ribosome. The polypeptide is Elongation factor Ts 1, mitochondrial (Thalassiosira pseudonana (Marine diatom)).